The sequence spans 435 residues: CUB and peptidase domain-containing protein 1 (435 aa).

The first 16 residues, 1-16 (SGFHLSFSFFRRAVCG), serve as a signal peptide directing secretion. The region spanning 25–261 (IVGGTVAPIN…LKSWITGKIS (237 aa)) is the Peptidase S1 domain. A disulfide bond links C50 and C66. Active-site charge relay system residues include H65 and D116. 4 cysteine pairs are disulfide-bonded: C151/C218, C182/C197, C208/C237, and C322/C341. S212 (charge relay system) is an active-site residue. The CUB domain occupies 256-378 (ITGKISRSPA…SGFHLSFSFF (123 aa)).

Belongs to the peptidase S1 family. In terms of tissue distribution, component of the acid-insoluble organic matrix of the aragonitic skeleton (at protein level).

The protein localises to the secreted. This chain is CUB and peptidase domain-containing protein 1, found in Acropora millepora (Staghorn coral).